Reading from the N-terminus, the 2475-residue chain is Non-reducing polyketide synthase prhL (2475 aa).

The N-terminal acylcarrier protein transacylase domain (SAT) stretch occupies residues 14–253 (VLFGSKYSEI…HHADHLSAAQ (240 aa)). The Ketosynthase family 3 (KS3) domain occupies 384–800 (SIPIAVTGLA…GSNAAIVLKE (417 aa)). Residues Cys549, His684, and His723 each act as for beta-ketoacyl synthase activity in the active site. Residues 910–1212 (LCFGGQTGNK…CPMDLSGPQA (303 aa)) form a malonyl-CoA:ACP transacylase (MAT) domain region. Catalysis depends on Ser997, which acts as the For acyl/malonyl transferase activity. An N-terminal hotdog fold region spans residues 1279 to 1407 (EGLKLVQLLK…GTISLSPGAN (129 aa)). Residues 1279 to 1586 (EGLKLVQLLK…FTSVSIQSLR (308 aa)) enclose the PKS/mFAS DH domain. The interval 1282–1585 (KLVQLLKNEG…TFTSVSIQSL (304 aa)) is product template (PT) domain. The active-site Proton acceptor; for dehydratase activity is the His1312. Residues 1435 to 1586 (SSSGLKRSTV…FTSVSIQSLR (152 aa)) form a C-terminal hotdog fold region. The active-site Proton donor; for dehydratase activity is the Asp1493. Positions 1626–1703 (SSNGDDLRTV…ALVQRIFPGR (78 aa)) constitute a Carrier domain. Residue Ser1663 is modified to O-(pantetheine 4'-phosphoryl)serine. The segment at 1865–2098 (HHTSEHKLLH…GFNWVDWTDN (234 aa)) is methyltransferase (CMeT) domain. Residues 2127–2475 (SDIHEETVVY…YEFLRSHVRL (349 aa)) form a thioesterase (TE) domain region. Active-site for thioesterase activity residues include Ser2250 and Asp2412.

The catalysed reaction is 3 malonyl-CoA + acetyl-CoA + 2 S-adenosyl-L-methionine = 3,5-dimethylorsellinate + 2 S-adenosyl-L-homocysteine + 3 CO2 + 4 CoA. The protein operates within secondary metabolite biosynthesis; terpenoid biosynthesis. Non-reducing polyketide synthase; part of the gene cluster that mediates the biosynthesis of paraherquonin, a meroterpenoid with a unique, highly congested hexacyclic molecular architecture. The first step of the pathway is the synthesis of 3,5-dimethylorsellinic acid (DMOA) by the polyketide synthase prhL. Synthesis of DMOA is followed by farnesylation by the prenyltransferase prhE, methylesterification by the methyl-transferase prhM, epoxidation of the prenyl chain by the flavin-dependent monooxygenase prhF, and cyclization of the farnesyl moiety by the terpene cyclase prhH, to yield the tetracyclic intermediate, protoaustinoid A. The short chain dehydrogenase prhI then oxidizes the C-3 alcohol group of the terpene cyclase product to transform protoaustinoid A into protoaustinoid B. The FAD-binding monooxygenase prhJ catalyzes the oxidation of protoaustinoid B into preaustinoid A which is further oxidized into preaustinoid A1 by FAD-binding monooxygenase phrK. Finally, prhA leads to berkeleydione via the berkeleyone B intermediate. PrhA is a multifunctional dioxygenase that first desaturates at C5-C6 to form berkeleyone B, followed by rearrangement of the A/B-ring to form the cycloheptadiene moiety in berkeleydione. Berkeleydione serves as the key intermediate for the biosynthesis of paraherquonin as well as many other meroterpenoids. The cytochrome P450 monooxygenases prhB, prhD, and prhN, as well as the isomerase prhC, are probably involved in the late stage of paraherquonin biosynthesis, after the production of berkeleydione. Especially prhC might be a multifunctional enzyme that catalyzes the D-ring expansion via intramolecular methoxy rearrangement, as well as the hydrolysis of the expanded D-ring. The polypeptide is Non-reducing polyketide synthase prhL (Penicillium brasilianum).